The sequence spans 317 residues: Transaldolase (317 aa).

The active-site Schiff-base intermediate with substrate is Lys-126.

Belongs to the transaldolase family. Type 1 subfamily. Homodimer.

It is found in the cytoplasm. It carries out the reaction D-sedoheptulose 7-phosphate + D-glyceraldehyde 3-phosphate = D-erythrose 4-phosphate + beta-D-fructose 6-phosphate. It functions in the pathway carbohydrate degradation; pentose phosphate pathway; D-glyceraldehyde 3-phosphate and beta-D-fructose 6-phosphate from D-ribose 5-phosphate and D-xylulose 5-phosphate (non-oxidative stage): step 2/3. In terms of biological role, transaldolase is important for the balance of metabolites in the pentose-phosphate pathway. In Paraburkholderia xenovorans (strain LB400), this protein is Transaldolase.